Reading from the N-terminus, the 230-residue chain is Nicotinamide riboside kinase (230 aa).

Residue Gly-12–Thr-20 coordinates ATP. Residues Ser-19 and Asp-38 each contribute to the Mg(2+) site. Asp-38 (proton acceptor) is an active-site residue. Substrate contacts are provided by residues Asp-38–Tyr-41 and Trp-56–Asp-57. Arg-153 serves as a coordination point for ATP. Substrate contacts are provided by residues Arg-154 and Gly-159–Tyr-160. Residues Arg-157–Gly-159 and Arg-203–Gln-205 contribute to the ATP site.

This sequence belongs to the uridine kinase family. NRK subfamily.

It catalyses the reaction beta-nicotinamide D-riboside + ATP = beta-nicotinamide D-ribonucleotide + ADP + H(+). The enzyme catalyses beta-D-ribosylnicotinate + ATP = nicotinate beta-D-ribonucleotide + ADP + H(+). The protein operates within cofactor biosynthesis; NAD(+) biosynthesis. Functionally, catalyzes the phosphorylation of nicotinamide riboside (NR) and nicotinic acid riboside (NaR) to form nicotinamide mononucleotide (NMN) and nicotinic acid mononucleotide (NaMN). This Schizosaccharomyces pombe (strain 972 / ATCC 24843) (Fission yeast) protein is Nicotinamide riboside kinase (nrk1).